A 172-amino-acid polypeptide reads, in one-letter code: RNA silencing suppressor p19 (172 aa).

Residues 153–172 (EGNVSGGSPEGIEAFEKESE) are disordered.

This sequence belongs to the tombusvirus protein p19 family. Homodimer.

Its function is as follows. Viral suppressor of RNA silencing which binds specifically to silencing RNAs (siRNAs). Acts as a molecular caliper to specifically select siRNAs based on the length of the duplex region of the RNA. The protein is RNA silencing suppressor p19 of Pelargonium zonale (PeNSV).